A 335-amino-acid polypeptide reads, in one-letter code: Glycerol-3-phosphate dehydrogenase [NAD(P)+] (335 aa).

Residues S15, Y16, R36, and K110 each contribute to the NADPH site. Positions 110, 139, and 141 each coordinate sn-glycerol 3-phosphate. A143 is an NADPH binding site. Sn-glycerol 3-phosphate contacts are provided by K195, D248, S258, R259, and N260. K195 functions as the Proton acceptor in the catalytic mechanism. Position 259 (R259) interacts with NADPH. Residues V283 and E285 each coordinate NADPH.

It belongs to the NAD-dependent glycerol-3-phosphate dehydrogenase family.

The protein resides in the cytoplasm. The catalysed reaction is sn-glycerol 3-phosphate + NAD(+) = dihydroxyacetone phosphate + NADH + H(+). It catalyses the reaction sn-glycerol 3-phosphate + NADP(+) = dihydroxyacetone phosphate + NADPH + H(+). It functions in the pathway membrane lipid metabolism; glycerophospholipid metabolism. Its function is as follows. Catalyzes the reduction of the glycolytic intermediate dihydroxyacetone phosphate (DHAP) to sn-glycerol 3-phosphate (G3P), the key precursor for phospholipid synthesis. This chain is Glycerol-3-phosphate dehydrogenase [NAD(P)+], found in Pseudoalteromonas translucida (strain TAC 125).